The following is a 295-amino-acid chain: UDP-N-acetylenolpyruvoylglucosamine reductase (295 aa).

Residues 26–189 (VGGRADILFK…VEAEFKGVNS (164 aa)) enclose the FAD-binding PCMH-type domain. Residue arginine 169 is part of the active site. Cysteine 218 functions as the Proton donor in the catalytic mechanism. The active site involves glutamate 288.

The protein belongs to the MurB family. FAD serves as cofactor.

It is found in the cytoplasm. The enzyme catalyses UDP-N-acetyl-alpha-D-muramate + NADP(+) = UDP-N-acetyl-3-O-(1-carboxyvinyl)-alpha-D-glucosamine + NADPH + H(+). It participates in cell wall biogenesis; peptidoglycan biosynthesis. In terms of biological role, cell wall formation. This Wolbachia sp. subsp. Drosophila simulans (strain wRi) protein is UDP-N-acetylenolpyruvoylglucosamine reductase.